We begin with the raw amino-acid sequence, 503 residues long: Cytochrome P450 3A25 (503 aa).

Cysteine 442 lines the heme pocket.

This sequence belongs to the cytochrome P450 family. Heme serves as cofactor.

It localises to the endoplasmic reticulum membrane. Its subcellular location is the microsome membrane. It carries out the reaction an organic molecule + reduced [NADPH--hemoprotein reductase] + O2 = an alcohol + oxidized [NADPH--hemoprotein reductase] + H2O + H(+). Cytochromes P450 are a group of heme-thiolate monooxygenases. In liver microsomes, this enzyme is involved in an NADPH-dependent electron transport pathway. It oxidizes a variety of structurally unrelated compounds, including steroids, fatty acids, and xenobiotics. This is Cytochrome P450 3A25 (Cyp3a25) from Mus musculus (Mouse).